Reading from the N-terminus, the 178-residue chain is ATP synthase subunit delta (178 aa).

It belongs to the ATPase delta chain family. In terms of assembly, F-type ATPases have 2 components, F(1) - the catalytic core - and F(0) - the membrane proton channel. F(1) has five subunits: alpha(3), beta(3), gamma(1), delta(1), epsilon(1). F(0) has three main subunits: a(1), b(2) and c(10-14). The alpha and beta chains form an alternating ring which encloses part of the gamma chain. F(1) is attached to F(0) by a central stalk formed by the gamma and epsilon chains, while a peripheral stalk is formed by the delta and b chains.

Its subcellular location is the cell membrane. Its function is as follows. F(1)F(0) ATP synthase produces ATP from ADP in the presence of a proton or sodium gradient. F-type ATPases consist of two structural domains, F(1) containing the extramembraneous catalytic core and F(0) containing the membrane proton channel, linked together by a central stalk and a peripheral stalk. During catalysis, ATP synthesis in the catalytic domain of F(1) is coupled via a rotary mechanism of the central stalk subunits to proton translocation. Functionally, this protein is part of the stalk that links CF(0) to CF(1). It either transmits conformational changes from CF(0) to CF(1) or is implicated in proton conduction. This is ATP synthase subunit delta from Streptococcus equi subsp. zooepidemicus (strain H70).